We begin with the raw amino-acid sequence, 1806 residues long: Atrochrysone carboxylic acid synthase (1806 aa).

The tract at residues 30–283 (DLQGLFRRLY…SLPVYSGLCH (254 aa)) is N-terminal acylcarrier protein transacylase domain (SAT). Positions 416 to 850 (QSKIAIIGMS…GGNTTVCLEE (435 aa)) constitute a Ketosynthase family 3 (KS3) domain. Residues C589, H725, and H768 each act as for beta-ketoacyl synthase activity in the active site. Residues 951–1270 (FAFTGQGASY…SLTALHCAGV (320 aa)) form a malonyl-CoA:ACP transacylase (MAT) domain region. The tract at residues 1340-1659 (TSTVQQIIEE…RILLNRFFTA (320 aa)) is product template (PT) domain. The interval 1344–1479 (QQIIEESFNG…ASILYDDAAL (136 aa)) is N-terminal hotdog fold. The 311-residue stretch at 1344 to 1654 (QQIIEESFNG…FRRYPRILLN (311 aa)) folds into the PKS/mFAS DH domain. The Proton acceptor; for dehydratase activity role is filled by H1376. The segment at 1506-1654 (IANRFTRNMA…FRRYPRILLN (149 aa)) is C-terminal hotdog fold. D1565 acts as the Proton donor; for dehydratase activity in catalysis. Residues 1668–1726 (HAAASSTPAPRTKPEPVPVATPATAAAPVAQSPAAPASVTPAPAPAPAPGPTPAAAPAA) are disordered. Low complexity predominate over residues 1685–1708 (PVATPATAAAPVAQSPAAPASVTP). The span at 1709-1721 (APAPAPAPGPTPA) shows a compositional bias: pro residues. In terms of domain architecture, Carrier spans 1728-1805 (GESDSVAAKA…DLRSWLLEYY (78 aa)). S1765 bears the O-(pantetheine 4'-phosphoryl)serine mark.

It carries out the reaction holo-[ACP] + 8 malonyl-CoA + 8 H(+) = atrochrysone carboxyl-[ACP] + 8 CO2 + 8 CoA + 2 H2O. It functions in the pathway secondary metabolite biosynthesis. Its function is as follows. Atrochrysone carboxylic acid synthase; part of the gene cluster that mediates the biosynthesis of monodictyphenone, a prenyl xanthone derivative. The pathway begins with the synthesis of atrochrysone thioester by the polyketide synthase (PKS) mdpG. The atrochrysone carboxyl ACP thioesterase mdpF then breaks the thioester bond and releases the atrochrysone carboxylic acid from mdpG. The atrochrysone carboxylic acid is then converted to atrochrysone which is further transformed into emodin anthrone. The next step is performed by the anthrone oxygenase mdpH that catalyzes the oxidation of emodinanthrone to emodin. Emodin is further modified to yield monodictyphenone via several steps involving mdpB, mdpC mdpJ, mdpK and mdpL. The short chain dehydrogenase mdpC converts the tautomers of emodin hydroquinone into the 3-hydroxy-3,4-dihydroan-thracen-1(2H)-one derivative. These enzymes with xptA, xptB and xptC are also proposed to be involved in the synthesis of shamixanthone from emodin. Especially, direct reduction of emodin by the short chain dehydrogenase mdpC followed by dehydration catalyzed by the scytalone dehydratase-like protein mdpB gives loss of oxygen and formation of chrysophanol intermediate in two simple steps. This Emericella nidulans (strain FGSC A4 / ATCC 38163 / CBS 112.46 / NRRL 194 / M139) (Aspergillus nidulans) protein is Atrochrysone carboxylic acid synthase.